The primary structure comprises 276 residues: MSIKKFKPTSPGKRYMTVASKEEITREEPEKSLLAPLKNKSGRNNQGRISTRRQGGRHKRKYRIIDWKRDKDGVPAKVASIEYDPNRTAYIALLNYVDGEKRYILAPLGIKPGDKIESGSKAEIRPGNALPIRNIPVGTIVHNVELKPEKGGQLARSAGTYCQIVAKEGKYAHVKLPSEEVRMIHLDCRATVGQVGNVEHENIDLGKAGRARWQGKRPSVRGVAMNAVDHPHGGGEGKAFVGRKTQYTPWGQKSAGYKTRRKAKKSDKYIVKKRNQ.

Disordered regions lie at residues 1–60 (MSIK…RHKR) and 226–276 (NAVD…KRNQ). A compositionally biased stretch (basic and acidic residues) spans 20 to 31 (SKEEITREEPEK). Basic residues-rich tracts occupy residues 50–60 (STRRQGGRHKR) and 258–276 (KTRR…KRNQ).

Belongs to the universal ribosomal protein uL2 family. Part of the 50S ribosomal subunit. Forms a bridge to the 30S subunit in the 70S ribosome.

Its function is as follows. One of the primary rRNA binding proteins. Required for association of the 30S and 50S subunits to form the 70S ribosome, for tRNA binding and peptide bond formation. It has been suggested to have peptidyltransferase activity; this is somewhat controversial. Makes several contacts with the 16S rRNA in the 70S ribosome. In Natranaerobius thermophilus (strain ATCC BAA-1301 / DSM 18059 / JW/NM-WN-LF), this protein is Large ribosomal subunit protein uL2.